We begin with the raw amino-acid sequence, 103 residues long: Large ribosomal subunit protein bL21 (103 aa).

It belongs to the bacterial ribosomal protein bL21 family. As to quaternary structure, part of the 50S ribosomal subunit. Contacts protein L20.

Its function is as follows. This protein binds to 23S rRNA in the presence of protein L20. The protein is Large ribosomal subunit protein bL21 of Marinobacter nauticus (strain ATCC 700491 / DSM 11845 / VT8) (Marinobacter aquaeolei).